Reading from the N-terminus, the 333-residue chain is DNA-directed RNA polymerase subunit alpha (333 aa).

The interval 1–251 (MEKLTKIKHR…AHFQTIGDLT (251 aa)) is alpha N-terminal domain (alpha-NTD). Residues 272–333 (DMEIRLLNLS…KLNEYGKLKN (62 aa)) are alpha C-terminal domain (alpha-CTD).

Belongs to the RNA polymerase alpha chain family. Homodimer. The RNAP catalytic core consists of 2 alpha, 1 beta, 1 beta' and 1 omega subunit. When a sigma factor is associated with the core the holoenzyme is formed, which can initiate transcription.

It catalyses the reaction RNA(n) + a ribonucleoside 5'-triphosphate = RNA(n+1) + diphosphate. In terms of biological role, DNA-dependent RNA polymerase catalyzes the transcription of DNA into RNA using the four ribonucleoside triphosphates as substrates. The chain is DNA-directed RNA polymerase subunit alpha from Mycoplasmopsis synoviae (strain 53) (Mycoplasma synoviae).